A 369-amino-acid polypeptide reads, in one-letter code: S-adenosylmethionine:tRNA ribosyltransferase-isomerase (369 aa).

It belongs to the QueA family. Monomer.

It is found in the cytoplasm. The catalysed reaction is 7-aminomethyl-7-carbaguanosine(34) in tRNA + S-adenosyl-L-methionine = epoxyqueuosine(34) in tRNA + adenine + L-methionine + 2 H(+). The protein operates within tRNA modification; tRNA-queuosine biosynthesis. In terms of biological role, transfers and isomerizes the ribose moiety from AdoMet to the 7-aminomethyl group of 7-deazaguanine (preQ1-tRNA) to give epoxyqueuosine (oQ-tRNA). This is S-adenosylmethionine:tRNA ribosyltransferase-isomerase from Synechococcus sp. (strain CC9311).